A 241-amino-acid chain; its full sequence is Copper transport protein CTR3 (241 aa).

The Lumenal segment spans residues 1–41 (MNMGGSSSTAAKKATCKISMLWNWYTIDTCFIARSWRNDTK). The chain crosses the membrane as a helical span at residues 42–62 (GKFAGSCIGCFALVVVAQWLT). Topologically, residues 63–159 (RFSRQFDVEL…SCCTLITPVD (97 aa)) are cytoplasmic. The chain crosses the membrane as a helical span at residues 160–180 (LYPTFLDHMIRVTIFVLQWGL). Residues 181–182 (SY) lie on the Lumenal side of the membrane. A helical transmembrane segment spans residues 183–203 (IIMLLFMYYNGYIIISCLIGA). The Cytoplasmic portion of the chain corresponds to 204–241 (IVGRFIFCYEPLGSLGANGSAQGTVSYDKESDDRKCCL).

Belongs to the copper transporter (Ctr) (TC 1.A.56) family. SLC31A subfamily.

The protein resides in the cytoplasmic vesicle membrane. Its function is as follows. Required for high affinity copper (probably reduced Cu I) transport into the cell. This chain is Copper transport protein CTR3 (CTR3), found in Saccharomyces cerevisiae (strain ATCC 204508 / S288c) (Baker's yeast).